The chain runs to 466 residues: Asparagine--tRNA ligase (466 aa).

The protein belongs to the class-II aminoacyl-tRNA synthetase family. As to quaternary structure, homodimer.

It is found in the cytoplasm. It catalyses the reaction tRNA(Asn) + L-asparagine + ATP = L-asparaginyl-tRNA(Asn) + AMP + diphosphate + H(+). The polypeptide is Asparagine--tRNA ligase (Buchnera aphidicola subsp. Baizongia pistaciae (strain Bp)).